A 293-amino-acid polypeptide reads, in one-letter code: MRQPLICSGHSRPVSDLSFSNENSDGSFIVSACLDGSPMLRNGENGDWIGTFEGHKGAVWSSRFNSTASQALTASADYTVKLWDTLNGSEILSIEHQSIVKTADFSNNNSRVVTGGSEKILRIFDLERPNDPLLQISGHTNTIKTATWSVHNDDIVLSGGLDEVIRIWDLRSGTQVSLCAKSSITSMEFSKDRRFLVTTAGNEVTFWDAQSFYPLKVYSLPFDVNCASLHPDNSKFIAGGSDFWVHVYDFSTGNEIEVNKGHHGPVNCCRFSPDGASFASGSLDGTIRLWKGM.

WD repeat units lie at residues 9 to 53 (GHSR…GTFE), 54 to 93 (GHKGAVWSSRFNSTASQALTASADYTVKLWDTLNGSEILS), 95 to 134 (EHQSIVKTADFSNNNSRVVTGGSEKILRIFDLERPNDPLL), 138 to 178 (GHTN…QVSL), 180 to 217 (AKSSITSMEFSKDRRFLVTTAGNEVTFWDAQSFYPLKV), 219 to 258 (SLPFDVNCASLHPDNSKFIAGGSDFWVHVYDFSTGNEIEV), and 261 to 293 (GHHGPVNCCRFSPDGASFASGSLDGTIRLWKGM).

It belongs to the WD repeat STRAP family. Part of the core SMN complex.

The SMN complex catalyzes the assembly of small nuclear ribonucleoproteins (snRNPs), the building blocks of the spliceosome, and thereby plays an important role in the splicing of cellular pre-mRNAs. Most spliceosomal snRNPs contain a common set of Sm proteins SNRPB, SNRPD1, SNRPD2, SNRPD3, SNRPE, SNRPF and SNRPG that assemble in a heptameric protein ring on the Sm site of the small nuclear RNA to form the core snRNP (Sm core). In the cytosol, the Sm proteins SNRPD1, SNRPD2, SNRPE, SNRPF and SNRPG are trapped in an inactive 6S pICln-Sm complex by the chaperone CLNS1A that controls the assembly of the core snRNP. To assemble core snRNPs, the SMN complex accepts the trapped 5Sm proteins from CLNS1A forming an intermediate. Binding of snRNA inside 5Sm triggers eviction of the SMN complex, thereby allowing binding of SNRPD3 and SNRPB to complete assembly of the core snRNP. STRAP may play a role in the cellular distribution of the SMN complex. The sequence is that of Serine-threonine kinase receptor-associated protein (strap) from Dictyostelium discoideum (Social amoeba).